Here is a 430-residue protein sequence, read N- to C-terminus: MAAIVIVGAQWGDEGKGKATDILGGKVDYVVKPNGGNNAGHTVVVGGEKYELKLLPAGILSENATPVLGNGVVINLEALFDEIDGLEARGANASRLKISANAHLVAPYHQTLDRVQERFLGKRAIGTTGRGIGPAYADKVARIGIRVQDIFDESILRQKVESALDIKNQMLVKMYNRKAIEPEQVVEYFLSYRDRLRPMVIEAELELNQALDEGKHVLMEGGQATMLDVDHGTYPFVTSSNPTAGGAAVGSGIGPTRITTSLGIIKAYTTRVGAGPFPTELFDKWGEYLQTTGGEIGVNTGRKRRCGWYDSVIARYATRVNGFTDYFLTKLDVLTGIGEIPICVAYDVDGKRYDEMPLTQSEFHHAEPIFETMPAWDEDITGCQTFEELPQKAQDYVLRLEELSGCRISYIGVGPGRDQTIVRHDVMQDQ.

GTP is bound by residues 12 to 18 (GDEGKGK) and 40 to 42 (GHT). D13 serves as the catalytic Proton acceptor. Mg(2+)-binding residues include D13 and G40. Residues 13 to 16 (DEGK), 38 to 41 (NAGH), T128, R142, Q223, T238, and R302 each bind IMP. Catalysis depends on H41, which acts as the Proton donor. Residue 298-304 (VNTGRKR) participates in substrate binding. GTP contacts are provided by residues R304, 330 to 332 (KLD), and 412 to 414 (GVG).

Belongs to the adenylosuccinate synthetase family. Homodimer. Requires Mg(2+) as cofactor.

The protein localises to the cytoplasm. The catalysed reaction is IMP + L-aspartate + GTP = N(6)-(1,2-dicarboxyethyl)-AMP + GDP + phosphate + 2 H(+). It participates in purine metabolism; AMP biosynthesis via de novo pathway; AMP from IMP: step 1/2. Functionally, plays an important role in the de novo pathway of purine nucleotide biosynthesis. Catalyzes the first committed step in the biosynthesis of AMP from IMP. The polypeptide is Adenylosuccinate synthetase (Corynebacterium aurimucosum (strain ATCC 700975 / DSM 44827 / CIP 107346 / CN-1) (Corynebacterium nigricans)).